Here is a 564-residue protein sequence, read N- to C-terminus: MAFQRRRNNYYNRLRRLLPFICAVSGALLILFALLSILSPPPDDSDRRISKHINYGANDEKKNTPVVFTVPRGGGRSDRDIWRSWNAEFFYGCCNASSKFPNAKAITRNDRYLAIATSGGLNQQRTGIVDAVVAARILNATLVIPKLDQKSYWKDASDFSNIFDVDWFMSFLSKDVKIIEKLPQKGGQTWSPRRMRVPRKCNEKCYINRVLPVLQKRHAVQLNKFDYRLSNKLRDDLQKLRCRVNYHALKFTDPILEMGNELVRRMRKRSKHFIALHLRFEPDMLAFSGCYYGGGEKEKKELGTIRRRWKTLHVNNPEKQRRQGRCPLTPEEVGLMLRALGYGSDVHIYVASGEVYGGEKSLAPLKALFPHFYSKDTIATKMELKPFSSYSSRMAALDFLVCDESDVFVTNNNGNMARILAGRRRYFGHKPTIRPNAKKLYKLFMSKENTTWEEFASRVRTFQKGFMGEPKEVRAGKGEFHENPAACICEDTDAKVKAGKMDSRKFGKKEQKEDEDAELSSSETDYEEDQTDLQDRGLYNGTRLDYDDALSVSEEPELEEMLSD.

Residues 17–37 (LLPFICAVSGALLILFALLSI) form a helical; Signal-anchor for type II membrane protein membrane-spanning segment. N-linked (GlcNAc...) asparagine glycans are attached at residues asparagine 95 and asparagine 139. 277–279 (HLR) provides a ligand contact to substrate. N-linked (GlcNAc...) asparagine glycosylation is present at asparagine 449. The segment covering 501–512 (MDSRKFGKKEQK) has biased composition (basic and acidic residues). Residues 501–542 (MDSRKFGKKEQKEDEDAELSSSETDYEEDQTDLQDRGLYNGT) form a disordered region. Over residues 513 to 532 (EDEDAELSSSETDYEEDQTD) the composition is skewed to acidic residues. The N-linked (GlcNAc...) asparagine glycan is linked to asparagine 540.

Belongs to the glycosyltransferase GT106 family.

The protein resides in the membrane. Its pathway is glycan metabolism. This is O-fucosyltransferase 6 from Arabidopsis thaliana (Mouse-ear cress).